Reading from the N-terminus, the 106-residue chain is Defensin-like protein 1 (106 aa).

The N-terminal stretch at 1–25 is a signal peptide; the sequence is MARSLCFMAFAVLAMMLFVAYEVQA. Intrachain disulfides connect C29–C73, C40–C60, C46–C67, and C50–C69.

The protein belongs to the DEFL family.

The protein resides in the secreted. Its subcellular location is the vacuole. The chain is Defensin-like protein 1 (THIO1) from Nicotiana paniculata.